Here is a 71-residue protein sequence, read N- to C-terminus: MRRLKRDPLERAFLRGYQYGVHGKSRELCPFTLPSVRQAWINGWREGRGDNWDGMTGTAGIHRLNELHAVG.

The protein belongs to the ribosome modulation factor family.

Its subcellular location is the cytoplasm. Functionally, during stationary phase, converts 70S ribosomes to an inactive dimeric form (100S ribosomes). This Pseudomonas savastanoi pv. phaseolicola (strain 1448A / Race 6) (Pseudomonas syringae pv. phaseolicola (strain 1448A / Race 6)) protein is Ribosome modulation factor.